The sequence spans 102 residues: Co-chaperonin GroES (102 aa).

The protein belongs to the GroES chaperonin family. As to quaternary structure, heptamer of 7 subunits arranged in a ring. Interacts with the chaperonin GroEL.

It localises to the cytoplasm. Together with the chaperonin GroEL, plays an essential role in assisting protein folding. The GroEL-GroES system forms a nano-cage that allows encapsulation of the non-native substrate proteins and provides a physical environment optimized to promote and accelerate protein folding. GroES binds to the apical surface of the GroEL ring, thereby capping the opening of the GroEL channel. This chain is Co-chaperonin GroES, found in Anabaena sp. (strain L31).